Here is a 283-residue protein sequence, read N- to C-terminus: 4-hydroxy-3-methylbut-2-enyl diphosphate reductase (283 aa).

Cys12 provides a ligand contact to [4Fe-4S] cluster. (2E)-4-hydroxy-3-methylbut-2-enyl diphosphate-binding residues include His40 and His72. Residues His40 and His72 each contribute to the dimethylallyl diphosphate site. Residues His40 and His72 each coordinate isopentenyl diphosphate. Residue Cys94 participates in [4Fe-4S] cluster binding. Residue His122 participates in (2E)-4-hydroxy-3-methylbut-2-enyl diphosphate binding. Position 122 (His122) interacts with dimethylallyl diphosphate. His122 contributes to the isopentenyl diphosphate binding site. The Proton donor role is filled by Glu124. Position 160 (Thr160) interacts with (2E)-4-hydroxy-3-methylbut-2-enyl diphosphate. [4Fe-4S] cluster is bound at residue Cys188. (2E)-4-hydroxy-3-methylbut-2-enyl diphosphate-binding residues include Ser216, Asn218, and Ser259. 3 residues coordinate dimethylallyl diphosphate: Ser216, Asn218, and Ser259. 3 residues coordinate isopentenyl diphosphate: Ser216, Asn218, and Ser259.

This sequence belongs to the IspH family. It depends on [4Fe-4S] cluster as a cofactor.

It catalyses the reaction isopentenyl diphosphate + 2 oxidized [2Fe-2S]-[ferredoxin] + H2O = (2E)-4-hydroxy-3-methylbut-2-enyl diphosphate + 2 reduced [2Fe-2S]-[ferredoxin] + 2 H(+). It carries out the reaction dimethylallyl diphosphate + 2 oxidized [2Fe-2S]-[ferredoxin] + H2O = (2E)-4-hydroxy-3-methylbut-2-enyl diphosphate + 2 reduced [2Fe-2S]-[ferredoxin] + 2 H(+). It participates in isoprenoid biosynthesis; dimethylallyl diphosphate biosynthesis; dimethylallyl diphosphate from (2E)-4-hydroxy-3-methylbutenyl diphosphate: step 1/1. Its pathway is isoprenoid biosynthesis; isopentenyl diphosphate biosynthesis via DXP pathway; isopentenyl diphosphate from 1-deoxy-D-xylulose 5-phosphate: step 6/6. In terms of biological role, catalyzes the conversion of 1-hydroxy-2-methyl-2-(E)-butenyl 4-diphosphate (HMBPP) into a mixture of isopentenyl diphosphate (IPP) and dimethylallyl diphosphate (DMAPP). Acts in the terminal step of the DOXP/MEP pathway for isoprenoid precursor biosynthesis. The sequence is that of 4-hydroxy-3-methylbut-2-enyl diphosphate reductase from Dictyoglomus thermophilum (strain ATCC 35947 / DSM 3960 / H-6-12).